Here is a 239-residue protein sequence, read N- to C-terminus: Ribonuclease 3 (239 aa).

The RNase III domain occupies 12–137 (RAKLEALIGH…LIAAIYLDGG (126 aa)). Position 50 (Glu50) interacts with Mg(2+). Asp54 is an active-site residue. Positions 123 and 126 each coordinate Mg(2+). Glu126 is an active-site residue. One can recognise a DRBM domain in the interval 162-231 (DAKTELQEWS…ATKMLEREGI (70 aa)).

Belongs to the ribonuclease III family. In terms of assembly, homodimer. Requires Mg(2+) as cofactor.

It localises to the cytoplasm. The enzyme catalyses Endonucleolytic cleavage to 5'-phosphomonoester.. Its function is as follows. Digests double-stranded RNA. Involved in the processing of primary rRNA transcript to yield the immediate precursors to the large and small rRNAs (23S and 16S). Processes some mRNAs, and tRNAs when they are encoded in the rRNA operon. Processes pre-crRNA and tracrRNA of type II CRISPR loci if present in the organism. The protein is Ribonuclease 3 of Rhizobium etli (strain ATCC 51251 / DSM 11541 / JCM 21823 / NBRC 15573 / CFN 42).